The following is a 240-amino-acid chain: Glycerol uptake facilitator protein 3 (240 aa).

The next 2 membrane-spanning stretches (helical) occupy residues 11–31 (LGEF…VAGV) and 41–61 (AGWV…VYAS). The NPA 1 motif lies at 70 to 72 (NPA). 3 helical membrane-spanning segments follow: residues 88-108 (VIPY…VVWL), 137-157 (FWNF…LLAF), and 162-182 (FTAG…GLSL). The NPA 2 signature appears at 191–193 (NPA). A helical transmembrane segment spans residues 219-239 (WVPIAGPLVGGALGALLFNVL).

Belongs to the MIP/aquaporin (TC 1.A.8) family.

The protein localises to the cell membrane. In terms of biological role, transporter that facilitates the transmembrane diffusion of water, dihydroxyacetone, glycerol and H(2)O(2). Is not permeable to urea and D/L-lactic acid. The chain is Glycerol uptake facilitator protein 3 from Lactiplantibacillus plantarum (strain ATCC BAA-793 / NCIMB 8826 / WCFS1) (Lactobacillus plantarum).